The following is a 337-amino-acid chain: MDSFKPYLAKVATGAALTREEARTAFDHLLSGEVTHAQAGAFLMALRVRGEAADEIVGAAGALRERMVRVAAPPGAIDIVGTGGDHSGSYNVSTLAAIITASCGVPVAKHGNRAASSRSGAADVLAALGVRLGLDPEALAQCLAQAGLCFMFAQTHHASMRHVAPVRVELGTRTLFNVLGPLCNPAGVSGQLFGVYAASLAEPLTRVLADLGSTRVWTVHGSDGLDEITTTGPTAVVALEDGAIRRFTIDPRELGLALAAPEDLRGADPEHNAAALRAVLDGARTPYRDIAVLNAAAALVVAGAAANLGEGVARAAQAVDSGAARATLDRLVAVSNA.

Residues Gly-81, 84-85, Ser-89, 91-94, 109-117, and Ala-121 each bind 5-phospho-alpha-D-ribose 1-diphosphate; these read GD, NVST, and KHGNRAASS. An anthranilate-binding site is contributed by Gly-81. Residue Ser-93 coordinates Mg(2+). Position 112 (Asn-112) interacts with anthranilate. Arg-167 contacts anthranilate. Positions 226 and 227 each coordinate Mg(2+).

Belongs to the anthranilate phosphoribosyltransferase family. In terms of assembly, homodimer. It depends on Mg(2+) as a cofactor.

It catalyses the reaction N-(5-phospho-beta-D-ribosyl)anthranilate + diphosphate = 5-phospho-alpha-D-ribose 1-diphosphate + anthranilate. Its pathway is amino-acid biosynthesis; L-tryptophan biosynthesis; L-tryptophan from chorismate: step 2/5. Its function is as follows. Catalyzes the transfer of the phosphoribosyl group of 5-phosphorylribose-1-pyrophosphate (PRPP) to anthranilate to yield N-(5'-phosphoribosyl)-anthranilate (PRA). The polypeptide is Anthranilate phosphoribosyltransferase (Methylobacterium nodulans (strain LMG 21967 / CNCM I-2342 / ORS 2060)).